A 513-amino-acid polypeptide reads, in one-letter code: MTRVINLDGESLTLEDVIAIARQGVACRIDDSAVEAVNASRKIVDDIVSEKRVVYGVTTGFGSLCNVSISPEDTVQLQENLIRTHASGFGDPLPEDAVRAIMLIRINSLVKGYSGIRLSTIEKLLELLNKGVHPYIPEKGSLGASGDLAPLAHMVLPMLGLGKAYYKGELLSGQEALDKAGIDKISLAAKEGLALINGTTVLTAIGALATYDAIQLLKLSDLAGALSLEVHNGITSPFEENLHTIRPQSGQLATARNIRNLLEGSQNTTVATQSRVQDPYTLRCMPQIHGASKDSIAYVKSKVDIEINSVTDNPIICKDGHVISGGNFHGEPMAQPFDFLGIAISEIGNVSERRVERLVNSQLSKLPSFLVKYPGLNSGFMITQYACASLASENKVLAHPASVDSIPSCENQEDFVSMGTTAARKAFEILKNSRRIVATEIMAACQALDLKSENHELGKGTKVAYDLFRKEVNFIEHDKHIEIYDELNKASTVIEDPSFLEAVEQAVELSIQF.

The segment at residues 144–146 (ASG) is a cross-link (5-imidazolinone (Ala-Gly)). Ser-145 carries the post-translational modification 2,3-didehydroalanine (Ser).

It belongs to the PAL/histidase family. Post-translationally, contains an active site 4-methylidene-imidazol-5-one (MIO), which is formed autocatalytically by cyclization and dehydration of residues Ala-Ser-Gly.

The protein resides in the cytoplasm. The enzyme catalyses L-histidine = trans-urocanate + NH4(+). Its pathway is amino-acid degradation; L-histidine degradation into L-glutamate; N-formimidoyl-L-glutamate from L-histidine: step 1/3. This is Histidine ammonia-lyase from Streptococcus pyogenes serotype M49 (strain NZ131).